The following is a 92-amino-acid chain: N(2)-fixation sustaining protein CowN (92 aa).

This sequence belongs to the CowN family.

Is required to sustain N(2)-dependent growth in the presence of low levels of carbon monoxide (CO). Probably acts by protecting the N(2) fixation ability of the nitrogenase complex, which is inactivated in the presence of CO. The chain is N(2)-fixation sustaining protein CowN from Rhodopseudomonas palustris (strain BisA53).